The chain runs to 193 residues: uncharacterized protein (193 aa).

2 disordered regions span residues 1-67 (MSGP…GPRS) and 110-160 (QRTP…LPGS). Low complexity-rich tracts occupy residues 50–64 (GPQR…ARPG) and 148–160 (AGAS…LPGS).

This is an uncharacterized protein from Homo sapiens (Human).